The sequence spans 170 residues: Small ribosomal subunit protein uS5 (170 aa).

The region spanning 16–79 is the S5 DRBM domain; the sequence is IEDQLVAINR…EAGKKNMISV (64 aa).

This sequence belongs to the universal ribosomal protein uS5 family. As to quaternary structure, part of the 30S ribosomal subunit. Contacts proteins S4 and S8.

Its function is as follows. With S4 and S12 plays an important role in translational accuracy. Functionally, located at the back of the 30S subunit body where it stabilizes the conformation of the head with respect to the body. The chain is Small ribosomal subunit protein uS5 from Lactobacillus delbrueckii subsp. bulgaricus (strain ATCC 11842 / DSM 20081 / BCRC 10696 / JCM 1002 / NBRC 13953 / NCIMB 11778 / NCTC 12712 / WDCM 00102 / Lb 14).